The chain runs to 564 residues: Dihydropyrimidinase-related protein 5 (564 aa).

2 positions are modified to phosphothreonine: Thr-509 and Thr-514. Phosphoserine occurs at positions 532 and 538. Arg-559 bears the Omega-N-methylarginine mark.

Belongs to the metallo-dependent hydrolases superfamily. Hydantoinase/dihydropyrimidinase family. Homotetramer, and heterotetramer with other DPYS-like proteins. Interacts with DPYSL2, DPYSL3 and DPYSL4. Interacts with MAP2 and TUBB3. As to expression, highly expressed in embryonic and early postnatal brain and spinal cord.

The protein localises to the cytoplasm. Its function is as follows. Involved in the negative regulation of dendrite outgrowth. This is Dihydropyrimidinase-related protein 5 (Dpysl5) from Rattus norvegicus (Rat).